Reading from the N-terminus, the 364-residue chain is Caffeic acid 3-O-methyltransferase 3 (364 aa).

Residue 129-135 (MNQDKVL) participates in substrate binding. The segment at 161–179 (AFEYHGTDPRFNKVFNKGM) is substrate binding. S-adenosyl-L-methionine contacts are provided by Gly207, Asp230, Asp250, Met251, and Lys264. Catalysis depends on His268, which acts as the Proton acceptor.

Belongs to the class I-like SAM-binding methyltransferase superfamily. Cation-independent O-methyltransferase family. COMT subfamily. As to quaternary structure, homodimer.

It catalyses the reaction (E)-caffeate + S-adenosyl-L-methionine = (E)-ferulate + S-adenosyl-L-homocysteine + H(+). It participates in aromatic compound metabolism; phenylpropanoid biosynthesis. In terms of biological role, catalyzes the conversion of caffeic acid to ferulic acid and of 5-hydroxyferulic acid to sinapic acid. The resulting products may subsequently be converted to the corresponding alcohols that are incorporated into lignins. The chain is Caffeic acid 3-O-methyltransferase 3 (HOMT3) from Populus kitakamiensis (Aspen).